The following is a 741-amino-acid chain: Protein ACCUMULATION AND REPLICATION OF CHLOROPLASTS 3, chloroplastic (741 aa).

The N-terminal 41 residues, 1–41 (MPISMELPVFSTLRVPLFSRLALLPTFGVPFSSLGATTRLN), are a transit peptide targeting the chloroplast. Disordered stretches follow at residues 444–465 (ENGDDSEYPLKEGEPSRNSRLD) and 539–558 (DSREESFFNPNGSTKDSSDT). A compositionally biased stretch (basic and acidic residues) spans 451–465 (YPLKEGEPSRNSRLD). Over residues 546–558 (FNPNGSTKDSSDT) the composition is skewed to polar residues. MORN repeat units lie at residues 612–628 (QGGLPEGKGRLVLGDGS), 630–652 (YDGMWHNGKRSGLGTFYFKNGDV), and 653–675 (FQGTWREDLIHGKGWFYFHKGDR).

Self-interacts. Interacts with FTSZ, CDP1/PARC6 (via N-terminus), MIND1 and MINE1. Part of a complex made of ARC3, ARC6, FTSZ1 and FTSZ2. Recruited to the middle of the plastid by CDP1/PARC6 where subsequent complex made of CDP1/PARC6, ARC3 and FtsZ proteins can form; this complex enhances the dynamics of Z rings during chloroplast division. Binding to FTSZ2-1 is enabled by ARC6.

It is found in the plastid. The protein localises to the chloroplast outer membrane. It localises to the chloroplast stroma. Together with MIND1 and MCD1, regulates FtsZ ring positioning in chloroplasts in an ARC6-dependent manner. Z-ring accessory protein involved in the initiation of plastid division and division site placement (might functionally replace bacterial MinC). Acts as a disassembly factor that accelerates fragmentation and depolymerization of existing FtsZ2 filaments by enhancing FTSZ2 GTPase activity, thus leading to the conversion of FTSZ2 bound GTP into GDP, a process which triggers FtsZ2 filaments destabilization. Prevents misplaced Z-ring formation at chloroplast stroma nondivision sites. May control the rate of chloroplast expansion. Seems to influence stromule (stroma-filled tubular extensions of the plastid envelope membrane) length and frequency. The chain is Protein ACCUMULATION AND REPLICATION OF CHLOROPLASTS 3, chloroplastic from Arabidopsis thaliana (Mouse-ear cress).